The chain runs to 86 residues: MNIFRLFGKQRTAPAARERLQLLLAHERSSVGSDLVFLLREEILAVIEKHVQLDRDKVQVKMDCNEHVSTLEIDVEIPLNATVRAA.

Belongs to the MinE family.

Prevents the cell division inhibition by proteins MinC and MinD at internal division sites while permitting inhibition at polar sites. This ensures cell division at the proper site by restricting the formation of a division septum at the midpoint of the long axis of the cell. In Rhizobium rhizogenes (strain K84 / ATCC BAA-868) (Agrobacterium radiobacter), this protein is Cell division topological specificity factor.